We begin with the raw amino-acid sequence, 105 residues long: Plastocyanin (105 aa).

The 105-residue stretch at 1 to 105 folds into the Plastocyanin-like domain; the sequence is ETYTVKLGSD…GMVGKITVAG (105 aa). Positions 39, 89, 92, and 97 each coordinate Cu(2+).

Belongs to the plastocyanin family. Cu(2+) is required as a cofactor.

Its subcellular location is the cellular thylakoid membrane. In terms of biological role, participates in electron transfer between P700 and the cytochrome b6-f complex in photosystem I. The chain is Plastocyanin (petE) from Anabaena variabilis.